A 574-amino-acid polypeptide reads, in one-letter code: 2-succinyl-5-enolpyruvyl-6-hydroxy-3-cyclohexene-1-carboxylate synthase (574 aa).

Belongs to the TPP enzyme family. MenD subfamily. As to quaternary structure, homodimer. Mg(2+) serves as cofactor. Mn(2+) is required as a cofactor. The cofactor is thiamine diphosphate.

The catalysed reaction is isochorismate + 2-oxoglutarate + H(+) = 5-enolpyruvoyl-6-hydroxy-2-succinyl-cyclohex-3-ene-1-carboxylate + CO2. It participates in quinol/quinone metabolism; 1,4-dihydroxy-2-naphthoate biosynthesis; 1,4-dihydroxy-2-naphthoate from chorismate: step 2/7. The protein operates within quinol/quinone metabolism; menaquinone biosynthesis. In terms of biological role, catalyzes the thiamine diphosphate-dependent decarboxylation of 2-oxoglutarate and the subsequent addition of the resulting succinic semialdehyde-thiamine pyrophosphate anion to isochorismate to yield 2-succinyl-5-enolpyruvyl-6-hydroxy-3-cyclohexene-1-carboxylate (SEPHCHC). This Vibrio atlanticus (strain LGP32) (Vibrio splendidus (strain Mel32)) protein is 2-succinyl-5-enolpyruvyl-6-hydroxy-3-cyclohexene-1-carboxylate synthase.